We begin with the raw amino-acid sequence, 412 residues long: Maintenance of mitochondrial morphology protein 1 (412 aa).

Over 1–81 the chain is Lumenal; sequence MTKELIKTEA…PANNWTFTQG (81 aa). Residues 82–102 form a helical membrane-spanning segment; sequence LVLGQISVIFIIIVFVKFFVF. The Cytoplasmic portion of the chain corresponds to 103–412; the sequence is ADSSTIPTKK…RSDSGTSENL (310 aa). One can recognise an SMP-LTD domain in the interval 165 to 382; sequence SPESLDWFNV…EPRFQVVRLP (218 aa). Residues 389 to 412 form a disordered region; that stretch reads KNTREPINKKTSVSRSDSGTSENL. Positions 397–412 are enriched in polar residues; it reads KKTSVSRSDSGTSENL.

It belongs to the MMM1 family. As to quaternary structure, homodimer. Component of the ER-mitochondria encounter structure (ERMES) or MDM complex, composed of MMM1, MDM10, MDM12 and MDM34. An MMM1 homodimer associates with one molecule of MDM12 on each side in a pairwise head-to-tail manner, and the SMP-LTD domains of MMM1 and MDM12 generate a continuous hydrophobic tunnel for phospholipid trafficking.

Its subcellular location is the endoplasmic reticulum membrane. Component of the ERMES/MDM complex, which serves as a molecular tether to connect the endoplasmic reticulum (ER) and mitochondria. Components of this complex are involved in the control of mitochondrial shape and protein biogenesis, and function in nonvesicular lipid trafficking between the ER and mitochondria. The MDM12-MMM1 subcomplex functions in the major beta-barrel assembly pathway that is responsible for biogenesis of all outer membrane beta-barrel proteins, and acts in a late step after the SAM complex. The MDM10-MDM12-MMM1 subcomplex further acts in the TOM40-specific pathway after the action of the MDM12-MMM1 complex. Essential for establishing and maintaining the structure of mitochondria and maintenance of mtDNA nucleoids. This Candida tropicalis (strain ATCC MYA-3404 / T1) (Yeast) protein is Maintenance of mitochondrial morphology protein 1.